Reading from the N-terminus, the 437-residue chain is Aminopeptidase G (437 aa).

Catalysis depends on residues C70, H361, and N382.

The protein belongs to the peptidase C1 family.

It localises to the cytoplasm. The polypeptide is Aminopeptidase G (pepG) (Lactobacillus delbrueckii subsp. lactis).